A 1207-amino-acid chain; its full sequence is Brassinosteroid LRR receptor kinase (1207 aa).

An N-terminal signal peptide occupies residues 1-34; sequence MKAHKTVFNQHPLSLNKLFFVLLLIFFLPPASPA. The Cys pair 1 motif lies at 71 to 78; sequence CSFTGVSC. LRR repeat units lie at residues 109-131, 135-157, 161-181, 186-207, 213-234, 235-257, 258-280, 282-304, 305-325, 329-350, 353-374, 378-400, 402-423, 428-450, 452-474, 476-499, 500-523, 524-547, 548-570, and 572-594; these read NLESLVLKNANLSGSLTSAAKSQ, TLDSIDLAENTISGPISDISSFG, NLKSLNLSKNFLDPPGKEMLK, SLQVLDLSYNNISGFNLFPWVS, ELEFFSLKGNKLAGSIPELDFK, NLSYLDLSANNFSTVFPSFKDCS, NLQHLDLSSNKFYGDIGSSLSSC, KLSFLNLTNNQFVGLVPKLPSES, LQYLYLRGNDFQGVYPNQLAD, TVVELDLSYNNFSGMVPESLGE, SLELVDISYNNFSGKLPVDTLS, NIKTMVLSFNKFVGGLPDSFSNL, KLETLDMSSNNLTGVIPSGICK, NLKVLYLQNNLFKGPIPDSLSNC, QLVSLDLSFNYLTGSIPSSLGSL, KLKDLILWLNQLSGEIPQELMYLQ, ALENLILDFNDLTGPIPASLSNCT, KLNWISLSNNQLSGEIPASLGRLS, NLAILKLGNNSISGNIPAELGNC, and SLIWLDLNTNFLNGSIPPPLFKQ. The N-linked (GlcNAc...) asparagine glycan is linked to Asn-119. Residues Asn-166 and Asn-196 are each glycosylated (N-linked (GlcNAc...) asparagine). N-linked (GlcNAc...) asparagine glycans are attached at residues Asn-235 and Asn-245. Asn-287 carries N-linked (GlcNAc...) asparagine glycosylation. N-linked (GlcNAc...) asparagine glycosylation is found at Asn-339 and Asn-363. 2 N-linked (GlcNAc...) asparagine glycosylation sites follow: Asn-412 and Asn-449. Asn-521 carries N-linked (GlcNAc...) asparagine glycosylation. N-linked (GlcNAc...) asparagine glycans are attached at residues Asn-556, Asn-584, Asn-646, and Asn-662. 4 LRR repeats span residues 664–686, 688–711, 712–735, and 736–758; these read SMIFLDLSYNKLEGSIPKELGAM, YLSILNLGHNDLSGMIPQQLGGLK, NVAILDLSYNRFNGTIPNSLTSLT, and LLGEIDLSNNNLSGMIPESAPFD. N-linked (GlcNAc...) asparagine glycosylation is found at Asn-724, Asn-746, and Asn-767. Positions 771-779 match the Cys pair 2 motif; it reads CGYPLPIPC. The chain crosses the membrane as a helical span at residues 803 to 823; it reads SVAMGLLFSLFCIFGLIIVAI. The region spanning 888–1163 is the Protein kinase domain; that stretch reads FHNDSLVGSG…IQVMAMFKEI (276 aa). Residues 894 to 902 and Lys-916 contribute to the ATP site; that span reads VGSGGFGDV. The Proton acceptor role is filled by Asp-1014.

Belongs to the protein kinase superfamily. Ser/Thr protein kinase family.

It localises to the cell membrane. It carries out the reaction L-seryl-[protein] + ATP = O-phospho-L-seryl-[protein] + ADP + H(+). The enzyme catalyses L-threonyl-[protein] + ATP = O-phospho-L-threonyl-[protein] + ADP + H(+). Functionally, receptor with a serine/threonine-protein kinase activity. Regulates, in response to brassinosteroid binding, a signaling cascade involved in plant development, including expression of light- and stress-regulated genes, promotion of cell elongation, normal leaf and chloroplast senescence, and flowering. May be involved in a feedback regulation of brassinosteroid biosynthesis. May be also involved in the perception of systemin, a peptide hormone responsible for the systemic activation of defense genes in leaves of wounded plants. The chain is Brassinosteroid LRR receptor kinase (CURL3) from Solanum lycopersicum (Tomato).